The primary structure comprises 342 residues: Dihydroorotase (342 aa).

His-13 and His-15 together coordinate Zn(2+). Residues 15–17 (HLR) and Asn-41 contribute to the substrate site. Lys-98, His-135, and His-173 together coordinate Zn(2+). Lys-98 is subject to N6-carboxylysine. His-135 contributes to the substrate binding site. Residue Leu-218 participates in substrate binding. Asp-246 lines the Zn(2+) pocket. Asp-246 is a catalytic residue. Substrate contacts are provided by His-250 and Ala-262.

This sequence belongs to the metallo-dependent hydrolases superfamily. DHOase family. Class II DHOase subfamily. In terms of assembly, homodimer. Requires Zn(2+) as cofactor.

It catalyses the reaction (S)-dihydroorotate + H2O = N-carbamoyl-L-aspartate + H(+). The protein operates within pyrimidine metabolism; UMP biosynthesis via de novo pathway; (S)-dihydroorotate from bicarbonate: step 3/3. Catalyzes the reversible cyclization of carbamoyl aspartate to dihydroorotate. This chain is Dihydroorotase, found in Vibrio cholerae serotype O1 (strain ATCC 39315 / El Tor Inaba N16961).